Reading from the N-terminus, the 384-residue chain is BarH-like 2 homeobox protein (384 aa).

Disordered stretches follow at residues 1–134 (MTAM…APRT), 154–235 (CAPY…ARTA), and 364–384 (PGGQ…PHPR). 2 stretches are compositionally biased toward low complexity: residues 101 to 110 (VPAQSLQPSP) and 119 to 134 (QSAA…APRT). A compositionally biased stretch (polar residues) spans 157-175 (YSTSVSSPHHTPKQESNAA). A compositionally biased stretch (basic and acidic residues) spans 177–217 (ESFRPKLEQEDGKTKLDKREDPQSDIKCHGTKEEGDREITS). A DNA-binding region (homeobox) is located at residues 229–288 (PRKARTAFSDHQLNQLERSFERQKYLSVQDRMDLAAALNLTDTQVKTWYQNRRTKWKRQT).

The protein belongs to the BAR homeobox family.

The protein localises to the nucleus. Its function is as follows. Potential regulator of neural basic helix-loop-helix genes. It may down-regulate expression of ASCL1 and, within the thalamus, up-regulate NGN2, thereby regulating distinct patterns of neuronal differentiation. This chain is BarH-like 2 homeobox protein (Barhl2), found in Mus musculus (Mouse).